The sequence spans 34 residues: Photosystem II reaction center protein M (34 aa).

The chain crosses the membrane as a helical span at residues 7–27; it reads GFLATLLFVAVPMLFLIGLYI.

This sequence belongs to the PsbM family. In terms of assembly, PSII is composed of 1 copy each of membrane proteins PsbA, PsbB, PsbC, PsbD, PsbE, PsbF, PsbH, PsbI, PsbJ, PsbK, PsbL, PsbM, PsbT, PsbX, PsbY, Psb30/Ycf12, peripheral proteins PsbO, CyanoQ (PsbQ), PsbU, PsbV and a large number of cofactors. It forms dimeric complexes.

The protein resides in the cellular thylakoid membrane. In terms of biological role, one of the components of the core complex of photosystem II (PSII). PSII is a light-driven water:plastoquinone oxidoreductase that uses light energy to abstract electrons from H(2)O, generating O(2) and a proton gradient subsequently used for ATP formation. It consists of a core antenna complex that captures photons, and an electron transfer chain that converts photonic excitation into a charge separation. This subunit is found at the monomer-monomer interface. This chain is Photosystem II reaction center protein M, found in Prochlorococcus marinus (strain MIT 9303).